Here is a 232-residue protein sequence, read N- to C-terminus: Lipid A 1-phosphatase (232 aa).

6 helical membrane-spanning segments follow: residues 10–30 (LFIT…PVGA), 42–62 (ELLT…LLFF), 80–100 (ALYV…SGLL), 136–156 (FPSG…LLFP), 160–180 (VAFI…GAHY), and 183–203 (DVIA…IVYA).

It belongs to the lipid A LpxE 1-phosphatase family.

It localises to the cell inner membrane. The protein operates within bacterial outer membrane biogenesis; LPS lipid A biosynthesis. Functionally, probably removes the 1-phosphate moiety from lipid A species. Does not seem to act on other membrane components, nor does it dephosphorylate the 4'-phosphate group of lipid A and/or lipid A precursors. The sequence is that of Lipid A 1-phosphatase from Rhizobium etli (strain ATCC 51251 / DSM 11541 / JCM 21823 / NBRC 15573 / CFN 42).